The chain runs to 144 residues: Bombinins BLP-7/GH-2 (144 aa).

The signal sequence occupies residues M1 to A18. Positions R19–R43 are excised as a propeptide. Residue N70 is modified to Asparagine amide. A propeptide spanning residues T74–R123 is cleaved from the precursor. Residue I143 is modified to Isoleucine amide.

Belongs to the bombinin family. Expressed by the skin glands.

The protein resides in the secreted. Functionally, antimicrobial peptide with activity against Gram-positive and -negative bacteria and fungi. Shows activity against P.acnes (MIC=5 uM), E.coli (MIC=5-6.3 uM), S.aureus (MIC=5-6.3 uM), M.luteus, S.cerevisiae and C.albicans (MIC=10-12.5 uM). Also reduces the production of interleukin (IL)-8 and granulocyte-macrophage colony stimulating factor (CSF2) in normal human epidermal keratinocytes (NHEKs). Shows anticancer activity against three human hepatoma cell lines. In vivo, using the rat ear edema model, suppress P.acnes-induced skin inflammation, significantly reducing the ear thickness. Shows weak hemolytic activity against human erythrocytes. Shows weak antimicrobial activity but high hemolytic activity. This chain is Bombinins BLP-7/GH-2, found in Bombina orientalis (Oriental fire-bellied toad).